A 193-amino-acid chain; its full sequence is MAQSDITIDALSKVGQQDAEYLVSLVRSVPGFPKEGIIFRDFMPVLADPKGLKILLKALEEALPVSPSEFDSIAGLESRGFLFGPVMAAHLGKGFIAVRKAGKLPPETIGESYDLEYGTASVEIETDAVQAGKRVLIVDDLIATGGTAKAATDLIEKAGGTVVGFSFVMRLDGLDGLDKLDGKPSSSLIAMPA.

The protein belongs to the purine/pyrimidine phosphoribosyltransferase family. As to quaternary structure, homodimer.

It is found in the cytoplasm. The enzyme catalyses AMP + diphosphate = 5-phospho-alpha-D-ribose 1-diphosphate + adenine. It participates in purine metabolism; AMP biosynthesis via salvage pathway; AMP from adenine: step 1/1. Its function is as follows. Catalyzes a salvage reaction resulting in the formation of AMP, that is energically less costly than de novo synthesis. The chain is Adenine phosphoribosyltransferase from Bifidobacterium longum (strain NCC 2705).